The chain runs to 376 residues: MLPLSIKDDEYKPPKFNLFRKISGWFRSILSDKTSRNLFFFLCLNLSFAFVELLYGIWSNCLGLISDSFHMFFDSTAILAGLAASVISKWRDNDAFSYGYVRAEVLAGFVNGLFLIFTAFFIFSEGVERALAPPDVHHERLLLVSILGFVVNLVGIFVFKHGGHGHSHGSGHGHSHSLFNGALDQTHGHGDHCHSHELKHGAAHSHDHAHGHGHFHSHDGPSLKETTGPSRQILQGVFLHILADTLGSIGVIASAIMMQNFGLMIADPICSILIAMLIVISVIPLLRESVGILMQRTPPLLENTLPQCYQRVQQLQGVYSLQEQHFWTLCSDVYVGTLKLVVAPDADARWILSQTHNIFTQAGVRQLYVQIDFAAM.

Residues 1–37 (MLPLSIKDDEYKPPKFNLFRKISGWFRSILSDKTSRN) lie on the Cytoplasmic side of the membrane. The helical transmembrane segment at 38 to 58 (LFFFLCLNLSFAFVELLYGIW) threads the bilayer. At 59 to 67 (SNCLGLISD) the chain is on the lumenal side. A helical membrane pass occupies residues 68–88 (SFHMFFDSTAILAGLAASVIS). Topologically, residues 89–102 (KWRDNDAFSYGYVR) are cytoplasmic. A helical membrane pass occupies residues 103–123 (AEVLAGFVNGLFLIFTAFFIF). Topologically, residues 124–140 (SEGVERALAPPDVHHER) are lumenal. A helical transmembrane segment spans residues 141–161 (LLLVSILGFVVNLVGIFVFKH). A his-rich loop region spans residues 161–218 (HGGHGHSHGSGHGHSHSLFNGALDQTHGHGDHCHSHELKHGAAHSHDHAHGHGHFHSH). Residues 162–236 (GGHGHSHGSG…TGPSRQILQG (75 aa)) are Cytoplasmic-facing. Basic and acidic residues predominate over residues 188–222 (GHGDHCHSHELKHGAAHSHDHAHGHGHFHSHDGPS). The segment at 188–226 (GHGDHCHSHELKHGAAHSHDHAHGHGHFHSHDGPSLKET) is disordered. Residues 237 to 257 (VFLHILADTLGSIGVIASAIM) traverse the membrane as a helical segment. At 258 to 262 (MQNFG) the chain is on the lumenal side. The chain crosses the membrane as a helical span at residues 263-283 (LMIADPICSILIAMLIVISVI). At 284–376 (PLLRESVGIL…LYVQIDFAAM (93 aa)) the chain is on the cytoplasmic side.

Belongs to the cation diffusion facilitator (CDF) transporter (TC 2.A.4) family. SLC30A subfamily. Homooligomer.

The protein resides in the golgi apparatus membrane. It is found in the cytoplasmic vesicle. It localises to the golgi apparatus. The protein localises to the trans-Golgi network. Its subcellular location is the sarcoplasmic reticulum. The protein resides in the mitochondrion. The catalysed reaction is Zn(2+)(in) = Zn(2+)(out). Zinc ion transporter mediating zinc entry from the cytosol into the lumen of organelles along the secretory pathway. By contributing to zinc ion homeostasis within the early secretory pathway, regulates the activation and folding of enzymes like alkaline phosphatases. This chain is Zinc transporter 7 (SLC30A7), found in Bos taurus (Bovine).